Consider the following 262-residue polypeptide: MALSLGWKAHRNHCGLLLQALRSSGLLLFPCGQCPWRGAGSFLDPEIKAFLEENTEVTSSGSLTPEIQLRLLTPRCKFWWERADLWPHSDPYWAIYWPGGQALSRYLLDNPDVVRGKSVLDLGSGCGATAIAAKMSGASRILANDIDPIAGMAITLNCELNRLNPFPILIQNILNLEQDKWDLVVLGDMFYDEDLADSLHQWLKKCFWTYRTRVLIGDPGRPQFSGHSIQHHLHKVVEYSLLESTRQENSGLTTSTVWGFQP.

The N-terminal 38 residues, 1-38 (MALSLGWKAHRNHCGLLLQALRSSGLLLFPCGQCPWRG), are a transit peptide targeting the mitochondrion.

It belongs to the methyltransferase superfamily. ETFBKMT family. As to quaternary structure, interacts with HSPD1; this protein may possibly be a methylation substrate.

The protein resides in the cytoplasm. It localises to the mitochondrion matrix. The catalysed reaction is L-lysyl-[protein] + 3 S-adenosyl-L-methionine = N(6),N(6),N(6)-trimethyl-L-lysyl-[protein] + 3 S-adenosyl-L-homocysteine + 3 H(+). Its function is as follows. Protein-lysine methyltransferase that selectively trimethylates the flavoprotein ETFB in mitochondria. Thereby, may negatively regulate the function of ETFB in electron transfer from Acyl-CoA dehydrogenases to the main respiratory chain. The polypeptide is Electron transfer flavoprotein beta subunit lysine methyltransferase (Homo sapiens (Human)).